Reading from the N-terminus, the 208-residue chain is Anthranilate synthase component 2 (208 aa).

One can recognise a Glutamine amidotransferase type-1 domain in the interval 3–208 (HVVLIDNHDS…SRCVEQLLAN (206 aa)). 53–55 (GPG) provides a ligand contact to L-glutamine. Cys-80 functions as the Nucleophile; for GATase activity in the catalytic mechanism. Residues Gln-84 and 145–146 (SL) each bind L-glutamine. Residues His-185 and Glu-187 each act as for GATase activity in the active site.

In terms of assembly, heterotetramer consisting of two non-identical subunits: a beta subunit (TrpG) and a large alpha subunit (TrpE).

It carries out the reaction chorismate + L-glutamine = anthranilate + pyruvate + L-glutamate + H(+). Its pathway is amino-acid biosynthesis; L-tryptophan biosynthesis; L-tryptophan from chorismate: step 1/5. Functionally, part of a heterotetrameric complex that catalyzes the two-step biosynthesis of anthranilate, an intermediate in the biosynthesis of L-tryptophan. In the first step, the glutamine-binding beta subunit (TrpG) of anthranilate synthase (AS) provides the glutamine amidotransferase activity which generates ammonia as a substrate that, along with chorismate, is used in the second step, catalyzed by the large alpha subunit of AS (TrpE) to produce anthranilate. In the absence of TrpG, TrpE can synthesize anthranilate directly from chorismate and high concentrations of ammonia. This is Anthranilate synthase component 2 (trpG) from Corynebacterium glutamicum (strain ATCC 13032 / DSM 20300 / JCM 1318 / BCRC 11384 / CCUG 27702 / LMG 3730 / NBRC 12168 / NCIMB 10025 / NRRL B-2784 / 534).